The chain runs to 953 residues: Glycine dehydrogenase (decarboxylating) (953 aa).

K705 bears the N6-(pyridoxal phosphate)lysine mark.

This sequence belongs to the GcvP family. The glycine cleavage system is composed of four proteins: P, T, L and H. The cofactor is pyridoxal 5'-phosphate.

The catalysed reaction is N(6)-[(R)-lipoyl]-L-lysyl-[glycine-cleavage complex H protein] + glycine + H(+) = N(6)-[(R)-S(8)-aminomethyldihydrolipoyl]-L-lysyl-[glycine-cleavage complex H protein] + CO2. Functionally, the glycine cleavage system catalyzes the degradation of glycine. The P protein binds the alpha-amino group of glycine through its pyridoxal phosphate cofactor; CO(2) is released and the remaining methylamine moiety is then transferred to the lipoamide cofactor of the H protein. The sequence is that of Glycine dehydrogenase (decarboxylating) from Sodalis glossinidius (strain morsitans).